The sequence spans 525 residues: MTSTSHFVASTVKKPRSRYGCLICRSMRKKCDEVHPQCGRCLKAGKQCIWKQPGTERKNKTKWRKAMQNNSIPIQDLADDFELDFPDTLDLTNPDALPVLGESIVNPISLPVDVASPFLPSECYPSKVELPYFPLLSKPNTLLSLLNDEEISCCEYYCYSVAPITTILPGQPNFLPQLLLPMALHEESVLYSLVASGYRLKYGNDNSLALQKSKVFVNRALLTLPERRSLNLSKSEFVVSLACYILLVYTEIAFADTTEWATYFLNAYNMINKMGGFKILKECSSEGKLLAECFAYFDILASQSNLNGTYYSISDYTDVYGVDELQLFESLENCIKPLVLIIGDIINLLVESRRAGFDDLQHTLNIYEKSQTIEGKIWSCVPQYEDMKSNKLDSEKSEPLQLFKLYKTTTEMYLRQVISRMPPVSLEMQVLLHKQTQLIDLLLESSLRNSLSFPMLIAGLNAATDLQRTNFKNRVNCLCQNYTIGSLKKVWIVVQEIWKMNQNGNICIDWYEVVQKFGWRLNTGV.

Residues 21-48 (CLICRSMRKKCDEVHPQCGRCLKAGKQC) constitute a DNA-binding region (zn(2)-C6 fungal-type).

It localises to the cytoplasm. The protein resides in the nucleus. This is an uncharacterized protein from Schizosaccharomyces pombe (strain 972 / ATCC 24843) (Fission yeast).